We begin with the raw amino-acid sequence, 148 residues long: Urease accessory protein UreE (148 aa).

This sequence belongs to the UreE family.

The protein localises to the cytoplasm. Functionally, involved in urease metallocenter assembly. Binds nickel. Probably functions as a nickel donor during metallocenter assembly. The sequence is that of Urease accessory protein UreE from Nostoc punctiforme (strain ATCC 29133 / PCC 73102).